We begin with the raw amino-acid sequence, 389 residues long: Probable protein phosphatase 2C 47 (389 aa).

The PPM-type phosphatase domain occupies 76 to 346 (RSGSFADIGP…DNLTVIVVCF (271 aa)). Residues aspartate 120, glycine 121, aspartate 294, and aspartate 337 each contribute to the Mn(2+) site.

This sequence belongs to the PP2C family. Mg(2+) is required as a cofactor. Mn(2+) serves as cofactor.

It carries out the reaction O-phospho-L-seryl-[protein] + H2O = L-seryl-[protein] + phosphate. The catalysed reaction is O-phospho-L-threonyl-[protein] + H2O = L-threonyl-[protein] + phosphate. The protein is Probable protein phosphatase 2C 47 of Oryza sativa subsp. japonica (Rice).